A 282-amino-acid polypeptide reads, in one-letter code: 2-dehydro-3-deoxyphosphooctonate aldolase (282 aa).

The protein belongs to the KdsA family.

It localises to the cytoplasm. The enzyme catalyses D-arabinose 5-phosphate + phosphoenolpyruvate + H2O = 3-deoxy-alpha-D-manno-2-octulosonate-8-phosphate + phosphate. The protein operates within carbohydrate biosynthesis; 3-deoxy-D-manno-octulosonate biosynthesis; 3-deoxy-D-manno-octulosonate from D-ribulose 5-phosphate: step 2/3. It participates in bacterial outer membrane biogenesis; lipopolysaccharide biosynthesis. In Bartonella bacilliformis (strain ATCC 35685 / KC583 / Herrer 020/F12,63), this protein is 2-dehydro-3-deoxyphosphooctonate aldolase.